The chain runs to 229 residues: MITQEHYCALPAPKIRTLKHLRTFEVTLDKHGLGPVAGVDEAGRGSCCGPITIAACIMPQRPIAQLQALTDSKKLSAAKRAELYPLIKKYALAWSIIHISAAEIDREGIQHANIFGMRRAIEKLDVAPGYVLTDAMKVPGLRCPSLPIIGGDAAVRCIAAASVLAKHSRDLIMDDLGGKYPEYGLEDHKGYGTKSHMDAVRHHGATPEHRYSYSNVKAAHDQWLQEKTQ.

In terms of domain architecture, RNase H type-2 spans 34 to 225 (GPVAGVDEAG…VKAAHDQWLQ (192 aa)). 3 residues coordinate a divalent metal cation: Asp40, Glu41, and Asp134.

This sequence belongs to the RNase HII family. Requires Mn(2+) as cofactor. It depends on Mg(2+) as a cofactor.

Its subcellular location is the cytoplasm. It carries out the reaction Endonucleolytic cleavage to 5'-phosphomonoester.. Functionally, endonuclease that specifically degrades the RNA of RNA-DNA hybrids. In Corynebacterium diphtheriae (strain ATCC 700971 / NCTC 13129 / Biotype gravis), this protein is Ribonuclease HII.